Here is a 148-residue protein sequence, read N- to C-terminus: Large ribosomal subunit protein bL9 (148 aa).

The protein belongs to the bacterial ribosomal protein bL9 family.

In terms of biological role, binds to the 23S rRNA. This is Large ribosomal subunit protein bL9 from Methylobacillus flagellatus (strain ATCC 51484 / DSM 6875 / VKM B-1610 / KT).